We begin with the raw amino-acid sequence, 637 residues long: Biosynthetic arginine decarboxylase (637 aa).

An N6-(pyridoxal phosphate)lysine modification is found at Lys-101. Residue 286-296 (FDVGGGLAVDY) participates in substrate binding.

Belongs to the Orn/Lys/Arg decarboxylase class-II family. SpeA subfamily. The cofactor is Mg(2+). It depends on pyridoxal 5'-phosphate as a cofactor.

The enzyme catalyses L-arginine + H(+) = agmatine + CO2. Its pathway is amine and polyamine biosynthesis; agmatine biosynthesis; agmatine from L-arginine: step 1/1. Catalyzes the biosynthesis of agmatine from arginine. This Shewanella piezotolerans (strain WP3 / JCM 13877) protein is Biosynthetic arginine decarboxylase.